A 122-amino-acid chain; its full sequence is Small ribosomal subunit protein uS13 (122 aa).

A disordered region spans residues 98–122; the sequence is VRGQKTKSNARTRKGPRPSRIKKKK. Over residues 101-122 the composition is skewed to basic residues; sequence QKTKSNARTRKGPRPSRIKKKK.

It belongs to the universal ribosomal protein uS13 family. Part of the 30S ribosomal subunit. Forms a loose heterodimer with protein S19. Forms two bridges to the 50S subunit in the 70S ribosome.

Functionally, located at the top of the head of the 30S subunit, it contacts several helices of the 16S rRNA. In the 70S ribosome it contacts the 23S rRNA (bridge B1a) and protein L5 of the 50S subunit (bridge B1b), connecting the 2 subunits; these bridges are implicated in subunit movement. Contacts the tRNAs in the A and P-sites. This chain is Small ribosomal subunit protein uS13, found in Thermosipho africanus (strain TCF52B).